A 324-amino-acid chain; its full sequence is tRNA pseudouridine synthase B (324 aa).

Asp-49 acts as the Nucleophile in catalysis. Positions 87–107 (RSTDDLEGQPTKTSDKRPSRE) are disordered.

This sequence belongs to the pseudouridine synthase TruB family. Type 1 subfamily.

It catalyses the reaction uridine(55) in tRNA = pseudouridine(55) in tRNA. Functionally, responsible for synthesis of pseudouridine from uracil-55 in the psi GC loop of transfer RNAs. The protein is tRNA pseudouridine synthase B of Brucella abortus (strain 2308).